A 330-amino-acid chain; its full sequence is Probable L-lactate dehydrogenase (330 aa).

The substrate site is built by arginine 105, asparagine 137, and arginine 168. Residue asparagine 137 coordinates NAD(+). Catalysis depends on histidine 192, which acts as the Proton acceptor.

This sequence belongs to the LDH/MDH superfamily. LDH family. In terms of assembly, homotetramer.

The protein resides in the cytoplasm. The enzyme catalyses (S)-lactate + NAD(+) = pyruvate + NADH + H(+). The protein operates within fermentation; pyruvate fermentation to lactate; (S)-lactate from pyruvate: step 1/1. This chain is Probable L-lactate dehydrogenase, found in Schizosaccharomyces pombe (strain 972 / ATCC 24843) (Fission yeast).